A 102-amino-acid polypeptide reads, in one-letter code: Small ribosomal subunit protein uS10 (102 aa).

The protein belongs to the universal ribosomal protein uS10 family. In terms of assembly, part of the 30S ribosomal subunit.

Involved in the binding of tRNA to the ribosomes. The protein is Small ribosomal subunit protein uS10 of Lactobacillus helveticus (strain DPC 4571).